A 42-amino-acid chain; its full sequence is Photosystem I reaction center subunit IX (42 aa).

The chain crosses the membrane as a helical span at residues 7–27 (YLSVAPVLATLWFGSLAGLLI).

The protein belongs to the PsaJ family.

The protein resides in the plastid. It is found in the chloroplast thylakoid membrane. May help in the organization of the PsaE and PsaF subunits. This chain is Photosystem I reaction center subunit IX, found in Chloranthus spicatus (Chulantree).